The chain runs to 397 residues: Phosphopentomutase (397 aa).

Mn(2+)-binding residues include Asp-10, Asp-296, His-301, Asp-337, His-338, and His-349.

Belongs to the phosphopentomutase family. Mn(2+) is required as a cofactor.

The protein localises to the cytoplasm. The catalysed reaction is 2-deoxy-alpha-D-ribose 1-phosphate = 2-deoxy-D-ribose 5-phosphate. It catalyses the reaction alpha-D-ribose 1-phosphate = D-ribose 5-phosphate. The protein operates within carbohydrate degradation; 2-deoxy-D-ribose 1-phosphate degradation; D-glyceraldehyde 3-phosphate and acetaldehyde from 2-deoxy-alpha-D-ribose 1-phosphate: step 1/2. Isomerase that catalyzes the conversion of deoxy-ribose 1-phosphate (dRib-1-P) and ribose 1-phosphate (Rib-1-P) to deoxy-ribose 5-phosphate (dRib-5-P) and ribose 5-phosphate (Rib-5-P), respectively. The protein is Phosphopentomutase of Elusimicrobium minutum (strain Pei191).